Consider the following 220-residue polypeptide: Probable N-acetyl-alpha-D-glucosaminyl L-malate deacetylase 2 (220 aa).

Zn(2+) contacts are provided by histidine 11, aspartate 14, and histidine 125.

The protein belongs to the PIGL family. It depends on Zn(2+) as a cofactor.

It catalyses the reaction (S)-malyl N-acetyl-alpha-D-glucosaminide + H2O = (S)-malyl alpha-D-glucosaminide + acetate. Its function is as follows. Involved in bacillithiol (BSH) biosynthesis. Catalyzes the second step of the pathway, the deacetylation of N-acetylglucosaminylmalate (GlcNAc-Mal) to glucosamine malate (GlcN-Mal). Has weak activity compared with bshB1. This Bacillus cereus (strain ATCC 14579 / DSM 31 / CCUG 7414 / JCM 2152 / NBRC 15305 / NCIMB 9373 / NCTC 2599 / NRRL B-3711) protein is Probable N-acetyl-alpha-D-glucosaminyl L-malate deacetylase 2.